Consider the following 196-residue polypeptide: Orotate phosphoribosyltransferase (196 aa).

Residue 117 to 125 (EDIVTTGLS) participates in 5-phospho-alpha-D-ribose 1-diphosphate binding. Orotate contacts are provided by Thr-121 and Arg-149.

This sequence belongs to the purine/pyrimidine phosphoribosyltransferase family. PyrE subfamily. As to quaternary structure, homodimer. The cofactor is Mg(2+).

The catalysed reaction is orotidine 5'-phosphate + diphosphate = orotate + 5-phospho-alpha-D-ribose 1-diphosphate. It functions in the pathway pyrimidine metabolism; UMP biosynthesis via de novo pathway; UMP from orotate: step 1/2. Its function is as follows. Catalyzes the transfer of a ribosyl phosphate group from 5-phosphoribose 1-diphosphate to orotate, leading to the formation of orotidine monophosphate (OMP). This Methylorubrum populi (strain ATCC BAA-705 / NCIMB 13946 / BJ001) (Methylobacterium populi) protein is Orotate phosphoribosyltransferase.